A 129-amino-acid chain; its full sequence is Transcription antitermination protein NusB (129 aa).

The protein belongs to the NusB family.

In terms of biological role, involved in transcription antitermination. Required for transcription of ribosomal RNA (rRNA) genes. Binds specifically to the boxA antiterminator sequence of the ribosomal RNA (rrn) operons. This chain is Transcription antitermination protein NusB, found in Staphylococcus aureus (strain N315).